Reading from the N-terminus, the 475-residue chain is Ribosomal protein uS12 methylthiotransferase RimO (475 aa).

Residues 5–114 enclose the MTTase N-terminal domain; the sequence is RTVRLIRLGC…IAQRLEDVLA (110 aa). [4Fe-4S] cluster is bound by residues C14, C49, C78, C174, C178, and C181. The Radical SAM core domain occupies 160–390; that stretch reads LDDSPVAPLK…AGIAEEVTAD (231 aa). Residues 393–461 form the TRAM domain; it reads RARLGETVDV…GVDFLAAPVT (69 aa).

It belongs to the methylthiotransferase family. RimO subfamily. [4Fe-4S] cluster serves as cofactor.

The protein resides in the cytoplasm. The enzyme catalyses L-aspartate(89)-[ribosomal protein uS12]-hydrogen + (sulfur carrier)-SH + AH2 + 2 S-adenosyl-L-methionine = 3-methylsulfanyl-L-aspartate(89)-[ribosomal protein uS12]-hydrogen + (sulfur carrier)-H + 5'-deoxyadenosine + L-methionine + A + S-adenosyl-L-homocysteine + 2 H(+). Its function is as follows. Catalyzes the methylthiolation of an aspartic acid residue of ribosomal protein uS12. The chain is Ribosomal protein uS12 methylthiotransferase RimO from Acidothermus cellulolyticus (strain ATCC 43068 / DSM 8971 / 11B).